The sequence spans 88 residues: UPF0297 protein GK2555 (88 aa).

It belongs to the UPF0297 family.

This chain is UPF0297 protein GK2555, found in Geobacillus kaustophilus (strain HTA426).